The sequence spans 758 residues: Microtubule-associated protein tau (758 aa).

Residues M1 to Q26 show a composition bias toward basic and acidic residues. The interval M1–V573 is disordered. A2 carries the post-translational modification N-acetylalanine. A phosphotyrosine mark is found at Y18 and Y29. K44 participates in a covalent cross-link: Glycyl lysine isopeptide (Lys-Gly) (interchain with G-Cter in ubiquitin). 2 positions are modified to phosphoserine: S46 and S61. The span at S61–T71 shows a compositional bias: polar residues. Phosphothreonine is present on residues T69, T71, and T111. Basic and acidic residues-rich tracts occupy residues E179 to K189 and G207 to E216. S214 is modified (phosphoserine). Positions E217–S228 are enriched in acidic residues. Positions E314–R323 are enriched in basic and acidic residues. A compositionally biased stretch (low complexity) spans A325–P340. Composition is skewed to basic and acidic residues over residues E344–E356 and K381–A393. Positions K440 to S452 are enriched in polar residues. A compositionally biased stretch (basic and acidic residues) spans K455–T466. A Phosphothreonine modification is found at T470. An Omega-N-methylarginine modification is found at R472. Residue K480 is modified to N6,N6-dimethyllysine; alternate. Residue K480 is modified to N6-acetyllysine; alternate. Phosphothreonine is present on residues T486, T492, and T498. Residues K491 to G503 are compositionally biased toward pro residues. 3 positions are modified to phosphoserine: S502, S508, and S512. Residues E504–S531 show a composition bias toward low complexity. Residue Y514 is modified to Phosphotyrosine. A phosphoserine mark is found at S515, S516, and S519. T522 and T529 each carry phosphothreonine. A Phosphoserine modification is found at S531. T534 carries the phosphothreonine modification. Residue K542 is modified to N6-acetyllysine. Phosphothreonine is present on T548. S552 and S554 each carry phosphoserine. Tau/MAP repeat units follow at residues Q561–K591, V592–S622, V623–Q653, and V654–H685. Residue K571 forms a Glycyl lysine isopeptide (Lys-Gly) (interchain with G-Cter in ubiquitin) linkage. N6-acetyllysine; alternate is present on K576. An N6-methyllysine; alternate modification is found at K576. A Glycyl lysine isopeptide (Lys-Gly) (interchain with G-Cter in ubiquitin); alternate cross-link involves residue K576. A Phosphoserine modification is found at S579. K584 is covalently cross-linked (Glycyl lysine isopeptide (Lys-Gly) (interchain with G-Cter in ubiquitin)). K598 carries the post-translational modification N6-acetyllysine; alternate. K598 participates in a covalent cross-link: Glycyl lysine isopeptide (Lys-Gly) (interchain with G-Cter in ubiquitin); alternate. 2 positions are modified to phosphoserine: S602 and S606. K607 is subject to N6-acetyllysine. S610 carries the phosphoserine modification. At K615 the chain carries N6-acetyllysine; alternate. Residue K615 forms a Glycyl lysine isopeptide (Lys-Gly) (interchain with G-Cter in ubiquitin); alternate linkage. Position 622 is a phosphoserine (S622). K628 carries the N6,N6-dimethyllysine; alternate modification. An N6-acetyllysine; alternate mark is found at K628, K634, and K638. Residues K628, K634, and K638 each participate in a glycyl lysine isopeptide (Lys-Gly) (interchain with G-Cter in ubiquitin); alternate cross-link. Residue S641 is modified to Phosphoserine. Residues K648, K660, and K664 each carry the N6-acetyllysine; alternate modification. Residues K648, K660, and K664 each participate in a glycyl lysine isopeptide (Lys-Gly) (interchain with G-Cter in ubiquitin); alternate cross-link. R666 carries the omega-N-methylarginine modification. S669 bears the Phosphoserine mark. K670 is covalently cross-linked (Glycyl lysine isopeptide (Lys-Gly) (interchain with G-Cter in ubiquitin)). S673 bears the Phosphoserine mark. K686 is modified (N6-acetyllysine; alternate). Residue K686 forms a Glycyl lysine isopeptide (Lys-Gly) (interchain with G-Cter in ubiquitin); alternate linkage. Residue K692 forms a Glycyl lysine isopeptide (Lys-Gly) (interchain with G-Cter in ubiquitin) linkage. The residue at position 702 (K702) is an N6-acetyllysine; alternate. Residue K702 forms a Glycyl lysine isopeptide (Lys-Gly) (interchain with G-Cter in ubiquitin); alternate linkage. Y711 carries the phosphotyrosine modification. S713 and S717 each carry phosphoserine. The tract at residues V715–I734 is disordered. The segment covering G718–S733 has biased composition (polar residues). T720 is modified (phosphothreonine). Phosphoserine is present on residues S721, S726, S733, and S739. T744 carries the phosphothreonine modification.

Interacts with MARK1, MARK2, MARK3 and MARK4. Interacts with SQSTM1 when polyubiquitinated. Interacts with PSMC2 through SQSTM1. Interacts with FKBP4. Binds to CSNK1D. Interacts with SGK1. Interacts with EPM2A; the interaction dephosphorylates MAPT at Ser-396. Interacts with PIN1. Interacts with LRRK2. Interacts with LRP1, leading to endocytosis; this interaction is reduced in the presence of LRPAP1/RAP. In terms of processing, polyubiquitinated. Requires functional TRAF6 and may provoke SQSTM1-dependent degradation by the proteasome. Post-translationally, phosphorylation at various serine and threonine residues in S-P or T-P motifs by proline-directed protein kinases (PDPK1, CDK1, CDK5, GSK3, MAPK) (a few sites per protein in interphase, more in mitosis), and at serine residues in K-X-G-S motifs by MAP/microtubule affinity-regulating kinase (MARK1, MARK2, MARK3 or MARK4), causing detachment from microtubules, and their disassembly. Phosphorylation at Ser-579 by BRSK1 and BRSK2 in neurons affects ability to bind microtubules and plays a role in neuron polarization. Phosphorylated by PHK. Dephosphorylation at several serine and threonine residues by the serine/threonine phosphatase PPP5C. Phosphorylation at Ser-214 by SGK1 mediates microtubule depolymerization and neurite formation in hippocampal neurons.

It is found in the cytoplasm. Its subcellular location is the cytosol. The protein localises to the cell membrane. It localises to the cytoskeleton. The protein resides in the cell projection. It is found in the axon. Its subcellular location is the dendrite. Its function is as follows. Promotes microtubule assembly and stability, and might be involved in the establishment and maintenance of neuronal polarity. The C-terminus binds axonal microtubules while the N-terminus binds neural plasma membrane components, suggesting that tau functions as a linker protein between both. Axonal polarity is predetermined by tau localization (in the neuronal cell) in the domain of the cell body defined by the centrosome. The short isoforms allow plasticity of the cytoskeleton whereas the longer isoforms may preferentially play a role in its stabilization. The protein is Microtubule-associated protein tau (MAPT) of Pongo pygmaeus (Bornean orangutan).